A 165-amino-acid chain; its full sequence is Anterior gradient protein 3 (165 aa).

An N-terminal signal peptide occupies residues 1–20 (MLHSALALCLLLITVSSNLA). The Prevents secretion from ER signature appears at 162 to 165 (QSEL).

This sequence belongs to the AGR family. Interacts with LYPD3 and DAG1 (alphaDAG1). As to expression, expressed in the ciliated cells of the airway epithelium. Not detected in the mucous cells.

Its subcellular location is the endoplasmic reticulum. It is found in the cytoplasm. In terms of biological role, required for calcium-mediated regulation of ciliary beat frequency and mucociliary clearance in the airway. Might be involved in the regulation of intracellular calcium in tracheal epithelial cells. The chain is Anterior gradient protein 3 from Mus musculus (Mouse).